The following is a 340-amino-acid chain: Ketol-acid reductoisomerase (NADP(+)) (340 aa).

The KARI N-terminal Rossmann domain maps to 1 to 183; sequence MAVTVYYDKD…GAGRTGIIET (183 aa). NADP(+)-binding positions include 26–29, Lys-49, Ser-54, and 84–87; these read FGSQ and DELQ. Residue His-109 is part of the active site. Position 135 (Gly-135) interacts with NADP(+). Residues 184-329 enclose the KARI C-terminal knotted domain; sequence TFKDETETDL…EKLRAMMPWI (146 aa). Asp-192, Glu-196, Glu-228, and Glu-232 together coordinate Mg(2+). Residue Ser-253 participates in substrate binding.

This sequence belongs to the ketol-acid reductoisomerase family. The cofactor is Mg(2+).

The catalysed reaction is (2R)-2,3-dihydroxy-3-methylbutanoate + NADP(+) = (2S)-2-acetolactate + NADPH + H(+). The enzyme catalyses (2R,3R)-2,3-dihydroxy-3-methylpentanoate + NADP(+) = (S)-2-ethyl-2-hydroxy-3-oxobutanoate + NADPH + H(+). The protein operates within amino-acid biosynthesis; L-isoleucine biosynthesis; L-isoleucine from 2-oxobutanoate: step 2/4. It functions in the pathway amino-acid biosynthesis; L-valine biosynthesis; L-valine from pyruvate: step 2/4. Its function is as follows. Involved in the biosynthesis of branched-chain amino acids (BCAA). Catalyzes an alkyl-migration followed by a ketol-acid reduction of (S)-2-acetolactate (S2AL) to yield (R)-2,3-dihydroxy-isovalerate. In the isomerase reaction, S2AL is rearranged via a Mg-dependent methyl migration to produce 3-hydroxy-3-methyl-2-ketobutyrate (HMKB). In the reductase reaction, this 2-ketoacid undergoes a metal-dependent reduction by NADPH to yield (R)-2,3-dihydroxy-isovalerate. The polypeptide is Ketol-acid reductoisomerase (NADP(+)) (Campylobacter hominis (strain ATCC BAA-381 / DSM 21671 / CCUG 45161 / LMG 19568 / NCTC 13146 / CH001A)).